Here is a 245-residue protein sequence, read N- to C-terminus: Carboxymethylenebutenolidase homolog (245 aa).

Ala2 carries the post-translational modification N-acetylalanine. Lys36 carries the post-translational modification N6-acetyllysine. Residues Cys132, Asp179, and His212 contribute to the active site. Phosphoserine is present on Ser223.

It belongs to the dienelactone hydrolase family. As to expression, widely expressed, with highest levels in liver, followed by kidney, small intestine and colon. Present in liver and intestine (at protein level).

The protein resides in the cytoplasm. It is found in the cytosol. Strongly inhibited by p-chloromercuribenzoate (PCMB). Partially inhibited by bis-p-nitrophenylphosphate (BNPP). Not inhibited by DFP, PMSF, eserine or EDTA. Cysteine hydrolase. Can convert the prodrug olmesartan medoxomil into its pharmacologically active metabolite olmerstatan, an angiotensin receptor blocker, in liver and intestine. May also activate beta-lactam antibiotics faropenem medoxomil and lenampicillin. The chain is Carboxymethylenebutenolidase homolog (CMBL) from Homo sapiens (Human).